Consider the following 563-residue polypeptide: Alpha-keto-acid decarboxylase (563 aa).

Glutamate 59 serves as a coordination point for thiamine diphosphate. The interval 348–367 (SPPVASPPAEPLPPPPPREQ) is disordered. Residues 351–366 (VASPPAEPLPPPPPRE) show a composition bias toward pro residues. The segment at 394–476 (TSFYGMADHR…VVVNNDGYTV (83 aa)) is thiamine pyrophosphate binding. The Mg(2+) site is built by aspartate 444, asparagine 471, and glycine 473.

This sequence belongs to the TPP enzyme family. It depends on a metal cation as a cofactor. Thiamine diphosphate is required as a cofactor.

Functionally, decarboxylates branched-chain and aromatic alpha-keto acids to aldehydes. The polypeptide is Alpha-keto-acid decarboxylase (kdc) (Mycobacterium avium (strain 104)).